The following is a 127-amino-acid chain: Holo-[acyl-carrier-protein] synthase (127 aa).

Positions 9 and 58 each coordinate Mg(2+).

Belongs to the P-Pant transferase superfamily. AcpS family. Mg(2+) is required as a cofactor.

It localises to the cytoplasm. The enzyme catalyses apo-[ACP] + CoA = holo-[ACP] + adenosine 3',5'-bisphosphate + H(+). Its function is as follows. Transfers the 4'-phosphopantetheine moiety from coenzyme A to a Ser of acyl-carrier-protein. The chain is Holo-[acyl-carrier-protein] synthase from Shewanella sp. (strain ANA-3).